The chain runs to 539 residues: Keratin, type II cytoskeletal 73 (539 aa).

The segment at 1 to 130 is head; it reads MNRQFTCKPG…DPEIQKVRAQ (130 aa). The coil 1A stretch occupies residues 131-166; that stretch reads EREQIKALNNKFASFIDKVRFLEQQNQVLQTKWELL. Residues 131–444 enclose the IF rod domain; the sequence is EREQIKALNN…KLLEGEECRM (314 aa). Positions 167–185 are linker 1; the sequence is QQLDLSNCRRNLEPVYEAH. The coil 1B stretch occupies residues 186–277; that stretch reads ISSLQKQLDS…CLYEGEITQM (92 aa). A linker 12 region spans residues 278–301; the sequence is QSHISDTSVVLSMDNNRNLDLDSI. A coil 2 region spans residues 302–440; it reads IAEVRAQYED…ATYRKLLEGE (139 aa). The interval 441–539 is tail; sequence ECRMSGEHTS…LGSPSKKTMR (99 aa).

This sequence belongs to the intermediate filament family. Heterotetramer of two type I and two type II keratins.

Functionally, has a role in hair formation. Specific component of keratin intermediate filaments in the inner root sheath (IRS) of the hair follicle. The chain is Keratin, type II cytoskeletal 73 (Krt73) from Mus musculus (Mouse).